The chain runs to 308 residues: Methionyl-tRNA formyltransferase (308 aa).

Serine 110–proline 113 contributes to the (6S)-5,6,7,8-tetrahydrofolate binding site.

It belongs to the Fmt family.

It catalyses the reaction L-methionyl-tRNA(fMet) + (6R)-10-formyltetrahydrofolate = N-formyl-L-methionyl-tRNA(fMet) + (6S)-5,6,7,8-tetrahydrofolate + H(+). Functionally, attaches a formyl group to the free amino group of methionyl-tRNA(fMet). The formyl group appears to play a dual role in the initiator identity of N-formylmethionyl-tRNA by promoting its recognition by IF2 and preventing the misappropriation of this tRNA by the elongation apparatus. The polypeptide is Methionyl-tRNA formyltransferase (Mycobacterium sp. (strain KMS)).